We begin with the raw amino-acid sequence, 259 residues long: UPF0246 protein PSPTO_1244 (259 aa).

This sequence belongs to the UPF0246 family.

In Pseudomonas syringae pv. tomato (strain ATCC BAA-871 / DC3000), this protein is UPF0246 protein PSPTO_1244.